The following is a 371-amino-acid chain: 4-hydroxy-3-methylbut-2-en-1-yl diphosphate synthase (flavodoxin) (371 aa).

[4Fe-4S] cluster-binding residues include C270, C273, C305, and E312.

The protein belongs to the IspG family. The cofactor is [4Fe-4S] cluster.

It carries out the reaction (2E)-4-hydroxy-3-methylbut-2-enyl diphosphate + oxidized [flavodoxin] + H2O + 2 H(+) = 2-C-methyl-D-erythritol 2,4-cyclic diphosphate + reduced [flavodoxin]. It participates in isoprenoid biosynthesis; isopentenyl diphosphate biosynthesis via DXP pathway; isopentenyl diphosphate from 1-deoxy-D-xylulose 5-phosphate: step 5/6. In terms of biological role, converts 2C-methyl-D-erythritol 2,4-cyclodiphosphate (ME-2,4cPP) into 1-hydroxy-2-methyl-2-(E)-butenyl 4-diphosphate. The polypeptide is 4-hydroxy-3-methylbut-2-en-1-yl diphosphate synthase (flavodoxin) (Shewanella frigidimarina (strain NCIMB 400)).